A 463-amino-acid polypeptide reads, in one-letter code: Asparagine--tRNA ligase (463 aa).

Belongs to the class-II aminoacyl-tRNA synthetase family. In terms of assembly, homodimer.

The protein localises to the cytoplasm. The catalysed reaction is tRNA(Asn) + L-asparagine + ATP = L-asparaginyl-tRNA(Asn) + AMP + diphosphate + H(+). In Clostridium botulinum (strain ATCC 19397 / Type A), this protein is Asparagine--tRNA ligase.